The primary structure comprises 432 residues: Enolase (432 aa).

Residue glutamine 167 coordinates (2R)-2-phosphoglycerate. Glutamate 209 serves as the catalytic Proton donor. Mg(2+) is bound by residues aspartate 246, glutamate 291, and aspartate 318. (2R)-2-phosphoglycerate contacts are provided by lysine 343, arginine 372, serine 373, and lysine 394. The Proton acceptor role is filled by lysine 343.

Belongs to the enolase family. As to quaternary structure, component of the RNA degradosome, a multiprotein complex involved in RNA processing and mRNA degradation. Requires Mg(2+) as cofactor.

The protein localises to the cytoplasm. It localises to the secreted. The protein resides in the cell surface. It carries out the reaction (2R)-2-phosphoglycerate = phosphoenolpyruvate + H2O. It participates in carbohydrate degradation; glycolysis; pyruvate from D-glyceraldehyde 3-phosphate: step 4/5. Functionally, catalyzes the reversible conversion of 2-phosphoglycerate (2-PG) into phosphoenolpyruvate (PEP). It is essential for the degradation of carbohydrates via glycolysis. The chain is Enolase from Aliivibrio fischeri (strain ATCC 700601 / ES114) (Vibrio fischeri).